A 278-amino-acid polypeptide reads, in one-letter code: Cytoplasmic envelopment protein 1 (278 aa).

Belongs to the herpesviridae cytoplasmic envelopment protein 1 family.

It is found in the virion. It localises to the virion tegument. The protein resides in the host cytoplasm. The protein localises to the host Golgi apparatus. In terms of biological role, plays a critical role in cytoplasmic virus egress. Participates in the final step of tegumentation and envelope acquisition within the host cytoplasm. The protein is Cytoplasmic envelopment protein 1 (ORF42) of Homo sapiens (Human).